The sequence spans 444 residues: MQHRDEILTPSQLNTLARDLLESAFPLVWIEGELGNVSRPSSGHLYVTLKDAQAQVRCAMFKPKSQWLTFQPREGLRVLARGRLTLYEARGDYQIVLDHLEESGEGALRRAFEQLRIRLEAEGLFDPARKQPLPVHPRRIAVITSPSGAVIRDILSVLMRRFPLVEIELLPSLVQGDTAAAQITHLLGGADSSGRYDAILIARGGGSLEDLWAFNNEQLARTIAAAHTPVISAIGHETDFTLADFAADIRAPTPSVAAELLVPDQRALRQHLGQLQQRLLHLQQHRLDQAIQRADQLGLRLQARNPEMHLRLLAQRQAEAGRRLQQCLHHVLDRAQGQLRNHHTRLYALNPRQQIAGLQKHLKHLNPQQPLQRRLQQEQLRLHGLVRALEAVNPLATVARGYALVRRADNNTLVRDSAQVCVGDVLDTKLAHGQLRVRVEISST.

The protein belongs to the XseA family. As to quaternary structure, heterooligomer composed of large and small subunits.

The protein resides in the cytoplasm. The catalysed reaction is Exonucleolytic cleavage in either 5'- to 3'- or 3'- to 5'-direction to yield nucleoside 5'-phosphates.. Its function is as follows. Bidirectionally degrades single-stranded DNA into large acid-insoluble oligonucleotides, which are then degraded further into small acid-soluble oligonucleotides. This is Exodeoxyribonuclease 7 large subunit from Xylella fastidiosa (strain M23).